A 93-amino-acid polypeptide reads, in one-letter code: Small ribosomal subunit protein uS19 (93 aa).

Belongs to the universal ribosomal protein uS19 family.

Functionally, protein S19 forms a complex with S13 that binds strongly to the 16S ribosomal RNA. This chain is Small ribosomal subunit protein uS19, found in Ehrlichia canis (strain Jake).